The following is a 341-amino-acid chain: Retinol dehydrogenase 10 (341 aa).

The helical; Signal-anchor transmembrane segment at 3–23 (IVVEFFLVTFKVLWAFVLAAA) threads the bilayer. NADP(+) is bound at residue 40 to 64 (LITGAGSGLGRLFALEFARRRALLV). Position 197 (Ser197) interacts with substrate. Tyr210 functions as the Proton acceptor in the catalytic mechanism.

It belongs to the short-chain dehydrogenases/reductases (SDR) family. In terms of tissue distribution, detected in retina, entire eyecups and in liver (at protein level).

The protein localises to the microsome membrane. Its subcellular location is the endoplasmic reticulum membrane. It carries out the reaction all-trans-retinol + NADP(+) = all-trans-retinal + NADPH + H(+). The protein operates within cofactor metabolism; retinol metabolism. Retinol dehydrogenase with a clear preference for NADP. Converts all-trans-retinol to all-trans-retinal. The sequence is that of Retinol dehydrogenase 10 (Rdh10) from Rattus norvegicus (Rat).